We begin with the raw amino-acid sequence, 172 residues long: Adenine phosphoribosyltransferase (172 aa).

The protein belongs to the purine/pyrimidine phosphoribosyltransferase family. Homodimer.

It localises to the cytoplasm. The catalysed reaction is AMP + diphosphate = 5-phospho-alpha-D-ribose 1-diphosphate + adenine. Its pathway is purine metabolism; AMP biosynthesis via salvage pathway; AMP from adenine: step 1/1. Catalyzes a salvage reaction resulting in the formation of AMP, that is energically less costly than de novo synthesis. The polypeptide is Adenine phosphoribosyltransferase (Desulforamulus reducens (strain ATCC BAA-1160 / DSM 100696 / MI-1) (Desulfotomaculum reducens)).